The sequence spans 425 residues: Inositol hexakisphosphate kinase 2 (425 aa).

Residues 206–208 and D219 contribute to the ATP site; that span reads ENL. Substrate-binding positions include 215–223, K221, and 235–242; these read PCVLDLKMG and KAANQIRK. D382 contacts ATP. Residue H385 coordinates substrate.

It belongs to the inositol phosphokinase (IPK) family. As to expression, highly expressed in small intestine.

Its subcellular location is the nucleus. It carries out the reaction 1D-myo-inositol hexakisphosphate + ATP = 5-diphospho-1D-myo-inositol 1,2,3,4,6-pentakisphosphate + ADP. It participates in phospholipid metabolism; phosphatidylinositol metabolism. Functionally, converts inositol hexakisphosphate (InsP6) to diphosphoinositol pentakisphosphate (InsP7/PP-InsP5). In Rattus norvegicus (Rat), this protein is Inositol hexakisphosphate kinase 2 (Ip6k2).